The following is a 494-amino-acid chain: Glutamyl-tRNA(Gln) amidotransferase subunit A (494 aa).

Residues K81 and S156 each act as charge relay system in the active site. The Acyl-ester intermediate role is filled by S180.

This sequence belongs to the amidase family. GatA subfamily. Heterotrimer of A, B and C subunits.

The catalysed reaction is L-glutamyl-tRNA(Gln) + L-glutamine + ATP + H2O = L-glutaminyl-tRNA(Gln) + L-glutamate + ADP + phosphate + H(+). In terms of biological role, allows the formation of correctly charged Gln-tRNA(Gln) through the transamidation of misacylated Glu-tRNA(Gln) in organisms which lack glutaminyl-tRNA synthetase. The reaction takes place in the presence of glutamine and ATP through an activated gamma-phospho-Glu-tRNA(Gln). The protein is Glutamyl-tRNA(Gln) amidotransferase subunit A of Mycolicibacterium gilvum (strain PYR-GCK) (Mycobacterium gilvum (strain PYR-GCK)).